The following is a 308-amino-acid chain: Cyclopropane mycolic acid synthase 2 (308 aa).

Residues 44-45 (YS), 79-87 (LLDIGCGWG), 105-110 (TLSANQ), and 137-138 (WE) each bind S-adenosyl-L-methionine. The active site involves Cys290.

Belongs to the CFA/CMAS family. In terms of assembly, homodimer.

It localises to the cytoplasm. It catalyses the reaction a 1-acyl-2-(9Z)-enoyl-sn-glycero-3-phospholipid + S-adenosyl-L-methionine = a 1-acyl-2-(9-cyclopronane)-acyl-sn-glycero-3-phospholipid + S-adenosyl-L-homocysteine + H(+). It participates in lipid metabolism; mycolic acid biosynthesis. Catalyzes the formation of trans cyclopropanated ketomycolate or methoxymycolate through the conversion of a double bond to a cyclopropane ring at the proximal position of an oxygenated mycolic acid via the transfer of a methylene group from S-adenosyl-L-methionine. In the absence of MmaA2, CmaA2 has a non-specific cis-cyclopropanating activity and is able to catalyze the conversion of a double bond to a cis cyclopropane ring at the distal position of an alpha mycolic acid. Cyclopropanated mycolic acids are key factors participating in cell envelope permeability, host immunomodulation and persistence. The chain is Cyclopropane mycolic acid synthase 2 (cmaA2) from Mycobacterium leprae (strain TN).